Consider the following 309-residue polypeptide: uncharacterized protein (309 aa).

Solcar repeat units lie at residues 6-83, 97-211, and 216-302; these read SDLY…LCHS, LTGY…FKRL, and NDKA…VSLL. Helical transmembrane passes span 12 to 32, 47 to 67, 100 to 120, 184 to 204, 222 to 242, and 285 to 305; these read ITAG…FEYL, IILP…VAAF, YNLL…IIPF, VQGT…QFTA, VITG…IDVV, and VGIS…LLGF.

The protein belongs to the mitochondrial carrier (TC 2.A.29) family.

It localises to the mitochondrion inner membrane. This is an uncharacterized protein from Saccharomyces cerevisiae (strain ATCC 204508 / S288c) (Baker's yeast).